A 285-amino-acid polypeptide reads, in one-letter code: Nucleotide-binding protein in ptsN-ptsO intergenic region (285 aa).

An ATP-binding site is contributed by 8 to 15 (GRSGSGKS). 60 to 63 (DARN) contacts GTP.

It belongs to the RapZ-like family.

In terms of biological role, displays ATPase and GTPase activities. In Stutzerimonas stutzeri (Pseudomonas stutzeri), this protein is Nucleotide-binding protein in ptsN-ptsO intergenic region.